The sequence spans 379 residues: Heterogeneous nuclear ribonucleoprotein A3 (379 aa).

Position 1 is an N-acetylmethionine (Met1). The span at 1–10 (MEVKPPPGRP) shows a compositional bias: pro residues. Positions 1-34 (MEVKPPPGRPQPDSGRRRRRRGEEGHDPKEPEQL) are disordered. Lys4 participates in a covalent cross-link: Glycyl lysine isopeptide (Lys-Gly) (interchain with G-Cter in SUMO2). A Phosphoserine modification is found at Ser14. A compositionally biased stretch (basic and acidic residues) spans 21–34 (RGEEGHDPKEPEQL). In terms of domain architecture, RRM 1 spans 35–118 (RKLFIGGLSF…RAVSREDSVK (84 aa)). A Glycyl lysine isopeptide (Lys-Gly) (interchain with G-Cter in SUMO2) cross-link involves residue Lys36. Residue Ser43 is modified to Phosphoserine. The residue at position 52 (Arg52) is a Dimethylated arginine; alternate. Arg52 carries the post-translational modification Omega-N-methylarginine; alternate. At Arg76 the chain carries Omega-N-methylarginine. Residues Ser112 and Ser116 each carry the phosphoserine modification. A Glycyl lysine isopeptide (Lys-Gly) (interchain with G-Cter in SUMO2) cross-link involves residue Lys118. Residue Thr124 is modified to Phosphothreonine. One can recognise an RRM 2 domain in the interval 126 to 205 (KKIFVGGIKE…CEVKKALSKQ (80 aa)). At Lys134 the chain carries N6-acetyllysine; alternate. Residue Lys134 forms a Glycyl lysine isopeptide (Lys-Gly) (interchain with G-Cter in SUMO2); alternate linkage. Glycyl lysine isopeptide (Lys-Gly) (interchain with G-Cter in SUMO2) cross-links involve residues Lys151 and Lys182. The segment at 204-225 (KQEMQSAGSQRGRGGGSGNFMG) is disordered. Omega-N-methylarginine; alternate is present on residues Arg214, Arg216, Arg226, Arg239, and Arg246. Residues Arg214, Arg216, Arg226, Arg239, and Arg246 each carry the asymmetric dimethylarginine; alternate modification. Positions 214–225 (RGRGGGSGNFMG) are enriched in gly residues. An Omega-N-methylarginine modification is found at Arg257. Asymmetric dimethylarginine is present on Arg286. The interval 335-379 (NYSGQQQSNYGPMKGGSFGGRSSGSPYGGGYGSGGGSGGYGSRRF) is disordered. Gly residues predominate over residues 347–379 (MKGGSFGGRSSGSPYGGGYGSGGGSGGYGSRRF). Ser351 is modified (phosphoserine). Arg355 is modified (omega-N-methylarginine). Ser359 bears the Phosphoserine mark. Residues Tyr361 and Tyr365 each carry the phosphotyrosine modification. A phosphoserine mark is found at Ser367 and Ser371. Tyr374 is modified (phosphotyrosine). Ser376 carries the post-translational modification Phosphoserine.

As to quaternary structure, identified in the spliceosome C complex.

The protein resides in the nucleus. Plays a role in cytoplasmic trafficking of RNA. Binds to the cis-acting response element, A2RE. May be involved in pre-mRNA splicing. The polypeptide is Heterogeneous nuclear ribonucleoprotein A3 (Hnrnpa3) (Mus musculus (Mouse)).